Reading from the N-terminus, the 601-residue chain is NADH-quinone oxidoreductase subunit C/D (601 aa).

The NADH dehydrogenase I subunit C stretch occupies residues 1–191 (MKLTRDFPSN…DPFMLDAAKQ (191 aa)). The tract at residues 215–601 (DYMFLNLGPN…IDFVMSDVDR (387 aa)) is NADH dehydrogenase I subunit D.

This sequence in the N-terminal section; belongs to the complex I 30 kDa subunit family. The protein in the C-terminal section; belongs to the complex I 49 kDa subunit family. NDH-1 is composed of 13 different subunits. Subunits NuoB, CD, E, F, and G constitute the peripheral sector of the complex.

It is found in the cell inner membrane. It carries out the reaction a quinone + NADH + 5 H(+)(in) = a quinol + NAD(+) + 4 H(+)(out). Its function is as follows. NDH-1 shuttles electrons from NADH, via FMN and iron-sulfur (Fe-S) centers, to quinones in the respiratory chain. The immediate electron acceptor for the enzyme in this species is believed to be ubiquinone. Couples the redox reaction to proton translocation (for every two electrons transferred, four hydrogen ions are translocated across the cytoplasmic membrane), and thus conserves the redox energy in a proton gradient. In Aeromonas salmonicida (strain A449), this protein is NADH-quinone oxidoreductase subunit C/D.